The sequence spans 81 residues: Photosystem I iron-sulfur center (81 aa).

2 consecutive 4Fe-4S ferredoxin-type domains span residues 2 to 31 (SHSVKVYDTCIGCTQCVRACPCDVLEMVSW) and 39 to 68 (IASAPRTEDCIGCKRCETACPTDFLSVRVY). Positions 11, 14, 17, 21, 48, 51, 54, and 58 each coordinate [4Fe-4S] cluster.

The eukaryotic PSI reaction center is composed of at least 11 subunits. The cofactor is [4Fe-4S] cluster.

The protein resides in the plastid. It is found in the chloroplast thylakoid membrane. It carries out the reaction reduced [plastocyanin] + hnu + oxidized [2Fe-2S]-[ferredoxin] = oxidized [plastocyanin] + reduced [2Fe-2S]-[ferredoxin]. Its function is as follows. Apoprotein for the two 4Fe-4S centers FA and FB of photosystem I (PSI); essential for photochemical activity. FB is the terminal electron acceptor of PSI, donating electrons to ferredoxin. The C-terminus interacts with PsaA/B/D and helps assemble the protein into the PSI complex. Required for binding of PsaD and PsaE to PSI. PSI is a plastocyanin/cytochrome c6-ferredoxin oxidoreductase, converting photonic excitation into a charge separation, which transfers an electron from the donor P700 chlorophyll pair to the spectroscopically characterized acceptors A0, A1, FX, FA and FB in turn. This chain is Photosystem I iron-sulfur center, found in Rhodomonas salina (Cryptomonas salina).